A 496-amino-acid chain; its full sequence is Hexokinase-2 (496 aa).

A helical transmembrane segment spans residues 4 to 24; the sequence is ATVGAVVVGTAAAVAVAALIM. In terms of domain architecture, Hexokinase spans 35-487; that stretch reads ARARAILKEF…SGIGAALLAA (453 aa). Positions 90-228 are hexokinase small subdomain; the sequence is TGDEGGVFYA…EIDMRVSALV (139 aa). Residues glycine 104, threonine 105, and asparagine 106 each coordinate ADP. D-glucose contacts are provided by threonine 194, lysine 195, asparagine 229, and aspartate 230. The tract at residues 229-476 is hexokinase large subdomain; that stretch reads NDTVGTLAGG…TSIVFKHAND (248 aa). Residue threonine 253 coordinates ADP. Residues asparagine 256, glutamate 284, and glutamate 315 each coordinate D-glucose. Residue glycine 441 coordinates ADP.

It belongs to the hexokinase family.

Its subcellular location is the plastid. The protein localises to the chloroplast outer membrane. It catalyses the reaction a D-hexose + ATP = a D-hexose 6-phosphate + ADP + H(+). The enzyme catalyses D-fructose + ATP = D-fructose 6-phosphate + ADP + H(+). It carries out the reaction D-glucose + ATP = D-glucose 6-phosphate + ADP + H(+). It participates in carbohydrate metabolism; hexose metabolism. It functions in the pathway carbohydrate degradation; glycolysis; D-glyceraldehyde 3-phosphate and glycerone phosphate from D-glucose: step 1/4. In terms of biological role, fructose and glucose phosphorylating enzyme. May be involved in the phosphorylation of glucose during the export from plastids to cytosol. Seems neither to be involved in cell sugar sensing nor in carbohydrate metabolism in tuber. The sequence is that of Hexokinase-2 (HXK2) from Solanum tuberosum (Potato).